Reading from the N-terminus, the 291-residue chain is Probable L-ascorbate peroxidase 4, peroxisomal (291 aa).

Residue histidine 40 is the Proton acceptor of the active site. Histidine 160 provides a ligand contact to heme b. K(+)-binding residues include threonine 161, threonine 177, and aspartate 184. A helical membrane pass occupies residues 263 to 283; sequence VLAQSAVGVAVAAAVVIVSYL.

It belongs to the peroxidase family. Ascorbate peroxidase subfamily. Requires heme b as cofactor. Expressed in leaves, stems and flowers.

Its subcellular location is the peroxisome membrane. It carries out the reaction L-ascorbate + H2O2 = L-dehydroascorbate + 2 H2O. Plays a key role in hydrogen peroxide removal. In Oryza sativa subsp. japonica (Rice), this protein is Probable L-ascorbate peroxidase 4, peroxisomal.